Here is a 256-residue protein sequence, read N- to C-terminus: Alcohol dehydrogenase (256 aa).

Residue 12–35 (FVAGLGGIGLDTSKELVKRDLKNL) participates in NAD(+) binding. Ser140 is a substrate binding site. Residue Tyr153 is the Proton acceptor of the active site.

Belongs to the short-chain dehydrogenases/reductases (SDR) family. Homodimer.

The enzyme catalyses a primary alcohol + NAD(+) = an aldehyde + NADH + H(+). It catalyses the reaction a secondary alcohol + NAD(+) = a ketone + NADH + H(+). This is Alcohol dehydrogenase (Adh) from Drosophila tsacasi (Fruit fly).